The sequence spans 1072 residues: DNA-directed RNA polymerase subunit beta (1072 aa).

It belongs to the RNA polymerase beta chain family. In terms of assembly, in plastids the minimal PEP RNA polymerase catalytic core is composed of four subunits: alpha, beta, beta', and beta''. When a (nuclear-encoded) sigma factor is associated with the core the holoenzyme is formed, which can initiate transcription.

It localises to the plastid. The protein resides in the chloroplast. The catalysed reaction is RNA(n) + a ribonucleoside 5'-triphosphate = RNA(n+1) + diphosphate. Functionally, DNA-dependent RNA polymerase catalyzes the transcription of DNA into RNA using the four ribonucleoside triphosphates as substrates. The polypeptide is DNA-directed RNA polymerase subunit beta (Nasturtium officinale (Watercress)).